Here is a 452-residue protein sequence, read N- to C-terminus: Phosphoglucosamine mutase (452 aa).

The Phosphoserine intermediate role is filled by Ser112. Residues Ser112, Asp251, Asp253, and Asp255 each coordinate Mg(2+). The residue at position 112 (Ser112) is a Phosphoserine.

It belongs to the phosphohexose mutase family. The cofactor is Mg(2+). Post-translationally, activated by phosphorylation.

It carries out the reaction alpha-D-glucosamine 1-phosphate = D-glucosamine 6-phosphate. Functionally, catalyzes the conversion of glucosamine-6-phosphate to glucosamine-1-phosphate. The sequence is that of Phosphoglucosamine mutase from Bordetella bronchiseptica (strain ATCC BAA-588 / NCTC 13252 / RB50) (Alcaligenes bronchisepticus).